Consider the following 605-residue polypeptide: Elongation factor 4 (605 aa).

One can recognise a tr-type G domain in the interval 11–193 (KRIRNFSIIA…KVVSNIPSPR (183 aa)). GTP is bound by residues 23–28 (DHGKST) and 140–143 (NKID).

It belongs to the TRAFAC class translation factor GTPase superfamily. Classic translation factor GTPase family. LepA subfamily.

The protein resides in the cell membrane. It catalyses the reaction GTP + H2O = GDP + phosphate + H(+). In terms of biological role, required for accurate and efficient protein synthesis under certain stress conditions. May act as a fidelity factor of the translation reaction, by catalyzing a one-codon backward translocation of tRNAs on improperly translocated ribosomes. Back-translocation proceeds from a post-translocation (POST) complex to a pre-translocation (PRE) complex, thus giving elongation factor G a second chance to translocate the tRNAs correctly. Binds to ribosomes in a GTP-dependent manner. The sequence is that of Elongation factor 4 from Phytoplasma mali (strain AT).